Reading from the N-terminus, the 276-residue chain is 4-deoxy-L-threo-5-hexosulose-uronate ketol-isomerase 1 (276 aa).

Positions 194, 196, 201, and 243 each coordinate Zn(2+).

This sequence belongs to the KduI family. It depends on Zn(2+) as a cofactor.

The catalysed reaction is 5-dehydro-4-deoxy-D-glucuronate = 3-deoxy-D-glycero-2,5-hexodiulosonate. Its pathway is glycan metabolism; pectin degradation; 2-dehydro-3-deoxy-D-gluconate from pectin: step 4/5. In terms of biological role, catalyzes the isomerization of 5-dehydro-4-deoxy-D-glucuronate to 3-deoxy-D-glycero-2,5-hexodiulosonate. The protein is 4-deoxy-L-threo-5-hexosulose-uronate ketol-isomerase 1 (kduI1) of Enterococcus faecalis (strain ATCC 700802 / V583).